The following is a 193-amino-acid chain: Zinc finger protein AZF3 (193 aa).

C2H2-type zinc fingers lie at residues 75 to 97 (YKCG…KASH) and 118 to 140 (HVCS…KRCH).

Expressed in roots.

Its subcellular location is the nucleus. In terms of biological role, transcriptional repressor probably involved in abiotic stress responses. Binds DNA in a sequence-specific manner and can repress the transactivation activity of other transcription factors. In Arabidopsis thaliana (Mouse-ear cress), this protein is Zinc finger protein AZF3 (AZF3).